The primary structure comprises 56 residues: Large ribosomal subunit protein bL32 (56 aa).

It belongs to the bacterial ribosomal protein bL32 family.

The chain is Large ribosomal subunit protein bL32 from Brevibacillus brevis (strain 47 / JCM 6285 / NBRC 100599).